We begin with the raw amino-acid sequence, 106 residues long: uncharacterized protein (106 aa).

Belongs to the SUI1 family.

This is an uncharacterized protein from Haemophilus influenzae (strain ATCC 51907 / DSM 11121 / KW20 / Rd).